A 309-amino-acid chain; its full sequence is Protein lifeguard 3 (309 aa).

2 disordered regions span residues 1 to 31 (MSNP…QPSV) and 64 to 84 (PMNY…SFRP). A compositionally biased stretch (basic and acidic residues) spans 70-84 (DYNEEERAGSDSFRP). Residues Ser-79 and Ser-81 each carry the phosphoserine modification. The next 7 helical transmembrane spans lie at 101–121 (YCII…FTFV), 132–152 (VAVY…LACC), 163–183 (IILL…ISSM), 188–208 (AVII…IFCF), 221–241 (FCVL…VLIF), 244–264 (IYWL…LFLA), and 286–306 (GALQ…QLVG).

Belongs to the BI1 family. LFG subfamily. Expressed in most tissues except spleen, thymus and testis.

The protein resides in the membrane. It is found in the lysosome membrane. The protein localises to the endosome membrane. Negatively regulates aortic matrix metalloproteinase-9 (MMP9) production and may play a protective role in vascular remodeling. This is Protein lifeguard 3 (Tmbim1) from Mus musculus (Mouse).